Reading from the N-terminus, the 395-residue chain is G-protein coupled receptor 182 (395 aa).

The Extracellular segment spans residues 1 to 53 (MSVIPSSRPVSTLAPDNDFREIHNWTELLHLFNQTFSDCHMELNENTKQVVLF). Asn-24 and Asn-33 each carry an N-linked (GlcNAc...) asparagine glycan. Residues 54-75 (VFYLAIFVVGLVENVLVICVNC) form a helical membrane-spanning segment. The Cytoplasmic segment spans residues 76–86 (RRSGRVGMLNL). The helical transmembrane segment at 87-109 (YILNMAVADLGIILSLPVWMLEV) threads the bilayer. The Extracellular segment spans residues 110 to 123 (MLEYTWLWGSFSCR). Cys-122 and Cys-198 are disulfide-bonded. The chain crosses the membrane as a helical span at residues 124–145 (FIHYFYLANMYSSIFFLTCLSI). The Cytoplasmic portion of the chain corresponds to 146 to 166 (DRYVTLTNTSPSWQRHQHRIR). Residues 167–189 (RAVCAGVWVLSAIIPLPEVVHIQ) traverse the membrane as a helical segment. Residues 190 to 213 (LLDGSEPMCLFLAPFETYSAWALA) lie on the Extracellular side of the membrane. Residues 214-235 (VALSATILGFLLPFPLIAVFNI) traverse the membrane as a helical segment. The Cytoplasmic segment spans residues 236–254 (LSACRLRRQGQTESRRHCL). The helical transmembrane segment at 255 to 276 (LMWAYIVVFVICWLPYHVTMLL) threads the bilayer. Residues 277-295 (LTLHTTHIFLHCNLVNFLY) are Extracellular-facing. Residues 296-316 (FFYEIIDCFSMLHCVANPILY) traverse the membrane as a helical segment. The Cytoplasmic segment spans residues 317 to 395 (NFLSPSFRGR…RTPHLHSAIP (79 aa)). Phosphoserine is present on Ser-329.

Belongs to the G-protein coupled receptor 1 family. In terms of tissue distribution, expressed in a wide variety of peripheral tissues in the adult rat with prominent expression in lung, testis, adrenal and liver.

The protein resides in the cell membrane. Functionally, orphan receptor. The protein is G-protein coupled receptor 182 (Gpr182) of Rattus norvegicus (Rat).